Here is a 547-residue protein sequence, read N- to C-terminus: Chaperonin GroEL (547 aa).

Residues 30–33 (TLGP), Lys51, 87–91 (DGTTT), Gly415, and Asp496 each bind ATP. A disordered region spans residues 525-547 (KPEPKSPAGGPGMGGMGGMDGMM). Residues 533-547 (GGPGMGGMGGMDGMM) show a composition bias toward gly residues.

It belongs to the chaperonin (HSP60) family. In terms of assembly, forms a cylinder of 14 subunits composed of two heptameric rings stacked back-to-back. Interacts with the co-chaperonin GroES.

The protein localises to the cytoplasm. The catalysed reaction is ATP + H2O + a folded polypeptide = ADP + phosphate + an unfolded polypeptide.. Its function is as follows. Together with its co-chaperonin GroES, plays an essential role in assisting protein folding. The GroEL-GroES system forms a nano-cage that allows encapsulation of the non-native substrate proteins and provides a physical environment optimized to promote and accelerate protein folding. The chain is Chaperonin GroEL from Cereibacter sphaeroides (strain ATCC 17029 / ATH 2.4.9) (Rhodobacter sphaeroides).